A 472-amino-acid polypeptide reads, in one-letter code: H(+)/Cl(-) exchange transporter ClcA (472 aa).

The Cytoplasmic segment spans residues 1–32 (MKAETPSFEAHQFVRVRRGDAVRRLIQRDKTP). The helical transmembrane segment at 33-69 (LAVLLMAAVVGTLAGLVGVAFEKSVNWVQNQRIGALA) threads the bilayer. Over 70-76 (QVADHWY) the chain is Periplasmic. A helical membrane pass occupies residues 77-100 (LVWPLAFILSALLAMVGYFLVRRF). Positions 106–110 (GSGIP) match the Selectivity filter part_1 motif. Chloride is bound at residue S107. Residues 109–116 (IPEIEGAL) constitute an intramembrane region (helical). Residues 117–123 (EELRPVR) lie on the Cytoplasmic side of the membrane. Helical transmembrane passes span 124 to 141 (WWRV…TLGA) and 148 to 166 (EGPM…LDIF). Positions 146–150 (GREGP) match the Selectivity filter part_2 motif. Residues 167–176 (RMRSPEARHT) lie on the Cytoplasmic side of the membrane. 2 consecutive intramembrane regions (helical) follow at residues 177–189 (LLAT…LSAA) and 193–201 (PLAGILFII). Topologically, residues 202–214 (EEMRPQFRYNLIS) are cytoplasmic. A helical membrane pass occupies residues 215 to 232 (IKAVFTGVIMSSIVFRIF). Over 233–252 (NGEAAIIEVGKLSNAPVNTL) the chain is Periplasmic. Residues 253–281 (WLYLVLGMLFGCFGPLFNFLVLRTQDIFQ) traverse the membrane as a helical segment. Residues 282-287 (RIHGGN) lie on the Cytoplasmic side of the membrane. Residues 288-309 (IKTWVLMGGVIGGICGLLGLMQ) traverse the membrane as a helical segment. The Periplasmic segment spans residues 310 to 329 (PSAVGGGFNLIPIAAAGNFS). The next 2 helical transmembrane spans lie at 330 to 349 (VGLL…ICFS) and 355 to 376 (GIFA…MAAI). The Selectivity filter part_3 signature appears at 355–359 (GIFAP). Residues I356 and F357 each coordinate chloride. Residues 377-386 (PLFPAYHLDA) are Periplasmic-facing. Residues 387–401 (GTFAIAGMGALLAAS) constitute an intramembrane region (helical). Residues 402-404 (VRA) constitute an intramembrane region (note=Loop between two helices). An intramembrane region (helical) is located at residues 405–416 (PLTGIVLVLEMT). The segment at residues 417–421 (DNYQL) is an intramembrane region (note=Loop between two helices). A helical membrane pass occupies residues 422 to 438 (ILPMIITCLGATLLAQF). The Cytoplasmic portion of the chain corresponds to 439 to 472 (LGGKPLYSTILQRTLAKQEAEQAAKAQQAPRENT). Chloride is bound at residue Y445.

This sequence belongs to the chloride channel (TC 2.A.49) family. ClcA subfamily. Homodimer.

Its subcellular location is the cell inner membrane. The enzyme catalyses 2 chloride(in) + H(+)(out) = 2 chloride(out) + H(+)(in). Its function is as follows. Proton-coupled chloride transporter. Functions as antiport system and exchanges two chloride ions for 1 proton. Probably acts as an electrical shunt for an outwardly-directed proton pump that is linked to amino acid decarboxylation, as part of the extreme acid resistance (XAR) response. The protein is H(+)/Cl(-) exchange transporter ClcA of Klebsiella pneumoniae (strain 342).